The following is a 267-amino-acid chain: 3-methyl-2-oxobutanoate hydroxymethyltransferase (267 aa).

Residues aspartate 46 and aspartate 85 each coordinate Mg(2+). 3-methyl-2-oxobutanoate is bound by residues 46-47, aspartate 85, and lysine 115; that span reads DS. Glutamate 117 is a binding site for Mg(2+). Catalysis depends on glutamate 184, which acts as the Proton acceptor.

It belongs to the PanB family. Homodecamer; pentamer of dimers. Mg(2+) is required as a cofactor.

It localises to the cytoplasm. It catalyses the reaction 3-methyl-2-oxobutanoate + (6R)-5,10-methylene-5,6,7,8-tetrahydrofolate + H2O = 2-dehydropantoate + (6S)-5,6,7,8-tetrahydrofolate. It functions in the pathway cofactor biosynthesis; (R)-pantothenate biosynthesis; (R)-pantoate from 3-methyl-2-oxobutanoate: step 1/2. Functionally, catalyzes the reversible reaction in which hydroxymethyl group from 5,10-methylenetetrahydrofolate is transferred onto alpha-ketoisovalerate to form ketopantoate. The chain is 3-methyl-2-oxobutanoate hydroxymethyltransferase from Geotalea daltonii (strain DSM 22248 / JCM 15807 / FRC-32) (Geobacter daltonii).